A 344-amino-acid polypeptide reads, in one-letter code: Transcription factor AIG1 (344 aa).

The bHLH domain occupies 131 to 180 (AASKSHSEAERRRRERINTHLAKLRSILPNTTKTDKASLLAEVIQHMKEL). The tract at residues 313 to 344 (NDESNDNNNLEKSSSGGIKRQRTSKMVNRCYN) is disordered. The segment covering 318-327 (DNNNLEKSSS) has biased composition (low complexity).

In terms of assembly, homodimer. Interacts with LHW.

The protein resides in the nucleus. In terms of biological role, transcription factor required for MONOPTEROS-dependent root initiation in embryo. Transcriptionally controlled by MONOPTEROS. The protein is Transcription factor AIG1 (BHLH32) of Arabidopsis thaliana (Mouse-ear cress).